The following is a 101-amino-acid chain: Small ribosomal subunit protein uS14 (101 aa).

Residues 51-72 form a disordered region; it reads LPRDSSPSRQRNPCRQTGRPHG. Residues 52–65 are compositionally biased toward polar residues; the sequence is PRDSSPSRQRNPCR.

Belongs to the universal ribosomal protein uS14 family. As to quaternary structure, part of the 30S ribosomal subunit. Contacts proteins S3 and S10.

Binds 16S rRNA, required for the assembly of 30S particles and may also be responsible for determining the conformation of the 16S rRNA at the A site. This is Small ribosomal subunit protein uS14 from Buchnera aphidicola subsp. Acyrthosiphon kondoi (Acyrthosiphon kondoi symbiotic bacterium).